The primary structure comprises 116 residues: Beta-2-microglobulin (116 aa).

An N-terminal signal peptide occupies residues 1–19 (MRAIITFALFCVLYVTVQG). One can recognise an Ig-like C1-type domain in the interval 24-110 (PKVQVYSHFP…VRHMNNKNIY (87 aa)). An intrachain disulfide couples cysteine 44 to cysteine 99.

This sequence belongs to the beta-2-microglobulin family. As to quaternary structure, heterodimer of an alpha chain and a beta chain. Beta-2-microglobulin is the beta-chain of major histocompatibility complex class I molecules.

It is found in the secreted. In terms of biological role, component of the class I major histocompatibility complex (MHC). Involved in the presentation of peptide antigens to the immune system. The polypeptide is Beta-2-microglobulin (b2m) (Cyprinus carpio (Common carp)).